A 362-amino-acid polypeptide reads, in one-letter code: Phosphoserine aminotransferase (362 aa).

L-glutamate-binding residues include Ser-9 and Arg-42. Residues 76 to 77 (GR), Trp-102, Thr-153, Asp-174, and Gln-197 contribute to the pyridoxal 5'-phosphate site. N6-(pyridoxal phosphate)lysine is present on Lys-198. 239-240 (NT) serves as a coordination point for pyridoxal 5'-phosphate.

Belongs to the class-V pyridoxal-phosphate-dependent aminotransferase family. SerC subfamily. As to quaternary structure, homodimer. Requires pyridoxal 5'-phosphate as cofactor.

The protein localises to the cytoplasm. The catalysed reaction is O-phospho-L-serine + 2-oxoglutarate = 3-phosphooxypyruvate + L-glutamate. It catalyses the reaction 4-(phosphooxy)-L-threonine + 2-oxoglutarate = (R)-3-hydroxy-2-oxo-4-phosphooxybutanoate + L-glutamate. It functions in the pathway amino-acid biosynthesis; L-serine biosynthesis; L-serine from 3-phospho-D-glycerate: step 2/3. The protein operates within cofactor biosynthesis; pyridoxine 5'-phosphate biosynthesis; pyridoxine 5'-phosphate from D-erythrose 4-phosphate: step 3/5. Functionally, catalyzes the reversible conversion of 3-phosphohydroxypyruvate to phosphoserine and of 3-hydroxy-2-oxo-4-phosphonooxybutanoate to phosphohydroxythreonine. Is involved in both pyridoxine and serine biosynthesis. This chain is Phosphoserine aminotransferase (serC), found in Escherichia coli (strain K12).